The sequence spans 333 residues: uncharacterized protein (333 aa).

The protein to E.coli YfeH.

This is an uncharacterized protein from Pseudomonas aeruginosa (strain ATCC 15692 / DSM 22644 / CIP 104116 / JCM 14847 / LMG 12228 / 1C / PRS 101 / PAO1).